Here is a 117-residue protein sequence, read N- to C-terminus: Probable prefoldin subunit 1 (117 aa).

This sequence belongs to the prefoldin subunit beta family. Heterohexamer of two PFD-alpha type and four PFD-beta type subunits. Expressed in the distal cell tip of developing embryos.

The protein localises to the cytoplasm. Functionally, binds specifically to cytosolic chaperonin (c-CPN) and transfers target proteins to it. Binds to nascent polypeptide chain and promotes folding in an environment in which there are many competing pathways for nonnative proteins. Has a role in gonadogenesis. The sequence is that of Probable prefoldin subunit 1 (pfd-1) from Caenorhabditis elegans.